Reading from the N-terminus, the 356-residue chain is UDP-N-acetylglucosamine--N-acetylmuramyl-(pentapeptide) pyrophosphoryl-undecaprenol N-acetylglucosamine transferase (356 aa).

Residues 12–14 (TGG), asparagine 124, arginine 163, serine 188, isoleucine 242, and glutamine 287 each bind UDP-N-acetyl-alpha-D-glucosamine.

The protein belongs to the glycosyltransferase 28 family. MurG subfamily.

It is found in the cell inner membrane. The enzyme catalyses di-trans,octa-cis-undecaprenyl diphospho-N-acetyl-alpha-D-muramoyl-L-alanyl-D-glutamyl-meso-2,6-diaminopimeloyl-D-alanyl-D-alanine + UDP-N-acetyl-alpha-D-glucosamine = di-trans,octa-cis-undecaprenyl diphospho-[N-acetyl-alpha-D-glucosaminyl-(1-&gt;4)]-N-acetyl-alpha-D-muramoyl-L-alanyl-D-glutamyl-meso-2,6-diaminopimeloyl-D-alanyl-D-alanine + UDP + H(+). The protein operates within cell wall biogenesis; peptidoglycan biosynthesis. In terms of biological role, cell wall formation. Catalyzes the transfer of a GlcNAc subunit on undecaprenyl-pyrophosphoryl-MurNAc-pentapeptide (lipid intermediate I) to form undecaprenyl-pyrophosphoryl-MurNAc-(pentapeptide)GlcNAc (lipid intermediate II). The sequence is that of UDP-N-acetylglucosamine--N-acetylmuramyl-(pentapeptide) pyrophosphoryl-undecaprenol N-acetylglucosamine transferase from Pseudomonas syringae pv. tomato (strain ATCC BAA-871 / DC3000).